The primary structure comprises 59 residues: Large ribosomal subunit protein bL32 (59 aa).

A disordered region spans residues 1–24; that stretch reads MAVQQNKKSPSKRGMHRSHDFLTS.

Belongs to the bacterial ribosomal protein bL32 family.

This is Large ribosomal subunit protein bL32 from Ralstonia nicotianae (strain ATCC BAA-1114 / GMI1000) (Ralstonia solanacearum).